A 444-amino-acid polypeptide reads, in one-letter code: UDP-N-acetylmuramate--L-alanine ligase (444 aa).

Residue 110–116 coordinates ATP; sequence GAHGKTS.

The protein belongs to the MurCDEF family. Phosphorylated by StkP in vitro. Dephosphorylated by PhpP in vitro.

The protein resides in the cytoplasm. It carries out the reaction UDP-N-acetyl-alpha-D-muramate + L-alanine + ATP = UDP-N-acetyl-alpha-D-muramoyl-L-alanine + ADP + phosphate + H(+). It participates in cell wall biogenesis; peptidoglycan biosynthesis. In terms of biological role, cell wall formation. The sequence is that of UDP-N-acetylmuramate--L-alanine ligase from Streptococcus pneumoniae serotype 4 (strain ATCC BAA-334 / TIGR4).